The following is a 529-amino-acid chain: uncharacterized protein (529 aa).

The first 20 residues, 1 to 20, serve as a signal peptide directing secretion; sequence MYFLILILVLLLIMVAAATA.

This is an uncharacterized protein from Orgyia pseudotsugata multicapsid polyhedrosis virus (OpMNPV).